Here is a 451-residue protein sequence, read N- to C-terminus: Chromosomal replication initiator protein DnaA (451 aa).

The tract at residues 1–77 (MTENEQIFWN…EVYNAQISVD (77 aa)) is domain I, interacts with DnaA modulators. The segment at 77–110 (DYVFEEDLMIEQNQTKINQKPKQQALNSLPTVTS) is domain II. Positions 111-329 (DLNSKYSFEN…GALKDISLGA (219 aa)) are domain III, AAA+ region. ATP is bound by residues glycine 155, glycine 157, lysine 158, and threonine 159. Residues 330 to 451 (NFKQIDTITV…EIETIKNKIK (122 aa)) form a domain IV, binds dsDNA region.

This sequence belongs to the DnaA family. In terms of assembly, oligomerizes as a right-handed, spiral filament on DNA at oriC.

It is found in the cytoplasm. Plays an essential role in the initiation and regulation of chromosomal replication. ATP-DnaA binds to the origin of replication (oriC) to initiate formation of the DNA replication initiation complex once per cell cycle. Binds the DnaA box (a 9 base pair repeat at the origin) and separates the double-stranded (ds)DNA. Forms a right-handed helical filament on oriC DNA; dsDNA binds to the exterior of the filament while single-stranded (ss)DNA is stabiized in the filament's interior. The ATP-DnaA-oriC complex binds and stabilizes one strand of the AT-rich DNA unwinding element (DUE), permitting loading of DNA polymerase. After initiation quickly degrades to an ADP-DnaA complex that is not apt for DNA replication. Binds acidic phospholipids. The polypeptide is Chromosomal replication initiator protein DnaA (Streptococcus pyogenes serotype M49 (strain NZ131)).